The primary structure comprises 594 residues: Protein wntless (594 aa).

Over 1–13 (MSGTILENLSGRK) the chain is Cytoplasmic. The chain crosses the membrane as a helical span at residues 14–34 (LSILVATLLLCQVLCFLLGGL). Topologically, residues 35-239 (YAPLPAGHVT…AIHQNGGFTQ (205 aa)) are lumenal. Asparagine 58 carries an N-linked (GlcNAc...) asparagine glycan. Residues 240 to 260 (IWLLLKTMLFPFVVGIMIWFW) form a helical membrane-spanning segment. Over 261-270 (RRVHLLQRSP) the chain is Cytoplasmic. Residues 271–291 (ALLEYMLIYLGAALTFLNLPL) traverse the membrane as a helical segment. At 292–311 (EYLSLVYEMPYMLLLSDIRQ) the chain is on the lumenal side. The helical transmembrane segment at 312–332 (GIFYAMLLTFWLVFAGEHMLI) threads the bilayer. Residues 333 to 344 (QDAPNKSTIRSR) are Cytoplasmic-facing. The chain crosses the membrane as a helical span at residues 345–365 (YWKHLSAVVVGCISLFVFDIC). Over 366-390 (ERGVQLRNPFYSIWTTPLGAKVAMT) the chain is Lumenal. Residues 391–411 (FIVLAGVSAAIYFLFLCYMIW) form a helical membrane-spanning segment. At 412-473 (KVFRNIGDKR…ANESKGLIYR (62 aa)) the chain is on the cytoplasmic side. The chain crosses the membrane as a helical span at residues 474–494 (FKFLMLATLVCAALTVAGFIM). Residues 495-514 (GQMAEGQWDWNDNVAIQPTS) lie on the Lumenal side of the membrane. A helical membrane pass occupies residues 515–535 (AFLTGVYGMWNIYIFALLILY). Residues 536–594 (APSHKQWPTMHHSDETTQSNENIVASAASEEIEFSHLPSDSNPSEISSLTSFTRKVAFD) are Cytoplasmic-facing. Residues 571–594 (HLPSDSNPSEISSLTSFTRKVAFD) are disordered. The span at 573-588 (PSDSNPSEISSLTSFT) shows a compositional bias: polar residues.

It belongs to the wntless family. As to quaternary structure, interacts with wg; in the Golgi. Interacts with Vps35, a component of the retromer complex; wls stability is regulated by Vps35. As to expression, ubiquitously expressed in the wing imaginal disk, increased expression is observed in a stripe at the dorso-ventral boundary and other regions of the wing disk that express wg. Also expresses in the leg imaginal disk. During larval development, expression is seen in both motorneurons and muscle.

The protein localises to the presynaptic cell membrane. Its subcellular location is the postsynaptic cell membrane. It localises to the cell membrane. It is found in the endosome membrane. The protein resides in the endoplasmic reticulum membrane. The protein localises to the golgi apparatus membrane. Its function is as follows. A segment polarity gene required for wingless (wg)-dependent patterning processes, acting in both wg-sending cells and wg-target cells. In non-neuronal cells wls directs wg secretion. The wls traffic loop encompasses the Golgi, the cell surface, an endocytic compartment and a retrograde route leading back to the Golgi, and involves clathrin-mediated endocytosis and the retromer complex (a conserved protein complex consisting of Vps35 and Vps26). In neuronal cells (the larval motorneuron NMJ), the wg signal moves across the synapse via the release of wls-containing exosome-like vesicles. Postsynaptic wls is required for the trafficking of fz2 through the fz2-interacting protein Grip. The polypeptide is Protein wntless (Drosophila melanogaster (Fruit fly)).